The following is a 217-amino-acid chain: Cytochrome c biogenesis ATP-binding export protein CcmA (217 aa).

An ABC transporter domain is found at 6–215 (FSAKNLACVR…HLDQFAVAEE (210 aa)). 38 to 45 (GPNGSGKS) is an ATP binding site.

This sequence belongs to the ABC transporter superfamily. CcmA exporter (TC 3.A.1.107) family. As to quaternary structure, the complex is composed of two ATP-binding proteins (CcmA) and two transmembrane proteins (CcmB).

The protein localises to the cell inner membrane. The catalysed reaction is heme b(in) + ATP + H2O = heme b(out) + ADP + phosphate + H(+). Its function is as follows. Part of the ABC transporter complex CcmAB involved in the biogenesis of c-type cytochromes; once thought to export heme, this seems not to be the case, but its exact role is uncertain. Responsible for energy coupling to the transport system. The chain is Cytochrome c biogenesis ATP-binding export protein CcmA from Paramagnetospirillum magneticum (strain ATCC 700264 / AMB-1) (Magnetospirillum magneticum).